The chain runs to 351 residues: AA9 family lytic polysaccharide monooxygenase A (351 aa).

Positions 1–20 (MSNKAATLLAALSGAALVAA) are cleaved as a signal peptide. Cu(2+)-binding residues include His21 and His107. Cys76 and Cys196 form a disulfide bridge. O2 is bound by residues His182 and Gln191. Tyr193 contributes to the Cu(2+) binding site. The CBM1 domain maps to 315-351 (GVAPKWGQCGGNGWTGPTVCASGSTCTVLNPYYSQCI).

This sequence belongs to the polysaccharide monooxygenase AA9 family. It depends on Cu(2+) as a cofactor.

The protein localises to the secreted. The enzyme catalyses [(1-&gt;4)-beta-D-glucosyl]n+m + reduced acceptor + O2 = 4-dehydro-beta-D-glucosyl-[(1-&gt;4)-beta-D-glucosyl]n-1 + [(1-&gt;4)-beta-D-glucosyl]m + acceptor + H2O.. Its function is as follows. Lytic polysaccharide monooxygenase (LPMO) that depolymerizes crystalline and amorphous polysaccharides via the oxidation of scissile alpha- or beta-(1-4)-glycosidic bonds, yielding C1 and C4 oxidation products. Catalysis by LPMOs requires the reduction of the active-site copper from Cu(II) to Cu(I) by a reducing agent and H(2)O(2) or O(2) as a cosubstrate. The protein is AA9 family lytic polysaccharide monooxygenase A of Podospora anserina (strain S / ATCC MYA-4624 / DSM 980 / FGSC 10383) (Pleurage anserina).